The chain runs to 271 residues: Expansin-B1 (271 aa).

The signal sequence occupies residues M1–S24. An Expansin-like EG45 domain is found at G58–K169. 3 disulfide bridges follow: C61-C90, C93-C164, and C98-C104. In terms of domain architecture, Expansin-like CBD spans Y182–S263. The N-linked (GlcNAc...) asparagine glycan is linked to N242.

The protein belongs to the expansin family. Expansin B subfamily.

It is found in the secreted. It localises to the cell wall. Its subcellular location is the membrane. In terms of biological role, may cause loosening and extension of plant cell walls by disrupting non-covalent bonding between cellulose microfibrils and matrix glucans. No enzymatic activity has been found. This chain is Expansin-B1 (EXPB1), found in Arabidopsis thaliana (Mouse-ear cress).